Consider the following 297-residue polypeptide: UDP-N-acetylenolpyruvoylglucosamine reductase (297 aa).

The region spanning Lys-26–Gly-191 is the FAD-binding PCMH-type domain. Residue Arg-171 is part of the active site. Residue Ser-220 is the Proton donor of the active site. Residue Glu-290 is part of the active site.

This sequence belongs to the MurB family. The cofactor is FAD.

It localises to the cytoplasm. The catalysed reaction is UDP-N-acetyl-alpha-D-muramate + NADP(+) = UDP-N-acetyl-3-O-(1-carboxyvinyl)-alpha-D-glucosamine + NADPH + H(+). Its pathway is cell wall biogenesis; peptidoglycan biosynthesis. Its function is as follows. Cell wall formation. This is UDP-N-acetylenolpyruvoylglucosamine reductase from Novosphingobium aromaticivorans (strain ATCC 700278 / DSM 12444 / CCUG 56034 / CIP 105152 / NBRC 16084 / F199).